A 410-amino-acid chain; its full sequence is Multifunctional CCA protein (410 aa).

Glycine 8 and arginine 11 together coordinate ATP. 2 residues coordinate CTP: glycine 8 and arginine 11. Aspartate 21 and aspartate 23 together coordinate Mg(2+). Arginine 91, arginine 137, and arginine 140 together coordinate ATP. Arginine 91, arginine 137, and arginine 140 together coordinate CTP. In terms of domain architecture, HD spans 228–329; it reads TGVHVLSVLQ…LELLQSFDVY (102 aa).

The protein belongs to the tRNA nucleotidyltransferase/poly(A) polymerase family. Bacterial CCA-adding enzyme type 1 subfamily. Monomer. Can also form homodimers and oligomers. Requires Mg(2+) as cofactor. It depends on Ni(2+) as a cofactor.

It carries out the reaction a tRNA precursor + 2 CTP + ATP = a tRNA with a 3' CCA end + 3 diphosphate. It catalyses the reaction a tRNA with a 3' CCA end + 2 CTP + ATP = a tRNA with a 3' CCACCA end + 3 diphosphate. Its function is as follows. Catalyzes the addition and repair of the essential 3'-terminal CCA sequence in tRNAs without using a nucleic acid template. Adds these three nucleotides in the order of C, C, and A to the tRNA nucleotide-73, using CTP and ATP as substrates and producing inorganic pyrophosphate. tRNA 3'-terminal CCA addition is required both for tRNA processing and repair. Also involved in tRNA surveillance by mediating tandem CCA addition to generate a CCACCA at the 3' terminus of unstable tRNAs. While stable tRNAs receive only 3'-terminal CCA, unstable tRNAs are marked with CCACCA and rapidly degraded. The chain is Multifunctional CCA protein from Pseudomonas paraeruginosa (strain DSM 24068 / PA7) (Pseudomonas aeruginosa (strain PA7)).